The primary structure comprises 87 residues: Small ribosomal subunit protein uS17 (87 aa).

This sequence belongs to the universal ribosomal protein uS17 family. As to quaternary structure, part of the 30S ribosomal subunit.

Functionally, one of the primary rRNA binding proteins, it binds specifically to the 5'-end of 16S ribosomal RNA. The sequence is that of Small ribosomal subunit protein uS17 from Neisseria meningitidis serogroup C (strain 053442).